Reading from the N-terminus, the 401-residue chain is Elongation factor Tu, apicoplast (401 aa).

The 197-residue stretch at 10-206 folds into the tr-type G domain; sequence KPHINIGTIG…ALDSYIPLPK (197 aa). Residues 19-26 are G1; sequence GHVDHGKT. GTP is bound at residue 19-26; that stretch reads GHVDHGKT. Mg(2+) is bound at residue threonine 26. The segment at 60 to 64 is G2; the sequence is GITIK. A G3 region spans residues 81–84; the sequence is DCPG. GTP is bound by residues 81-85 and 136-139; these read DCPGH and NKID. Residues 136-139 are G4; it reads NKID. The interval 173–175 is G5; the sequence is SAL.

It belongs to the TRAFAC class translation factor GTPase superfamily. Classic translation factor GTPase family. EF-Tu/EF-1A subfamily. As to quaternary structure, monomer.

Its subcellular location is the plastid. The protein localises to the apicoplast. The enzyme catalyses GTP + H2O = GDP + phosphate + H(+). Its function is as follows. GTP hydrolase that promotes the GTP-dependent binding of aminoacyl-tRNA to the A-site of ribosomes during protein biosynthesis. The chain is Elongation factor Tu, apicoplast (tufA) from Toxoplasma gondii.